Here is a 72-residue protein sequence, read N- to C-terminus: Bowman-Birk type trypsin inhibitor (72 aa).

7 disulfides stabilise this stretch: Cys-12–Cys-66, Cys-13–Cys-28, Cys-16–Cys-62, Cys-18–Cys-26, Cys-36–Cys-43, Cys-40–Cys-55, and Cys-45–Cys-53.

This sequence belongs to the Bowman-Birk serine protease inhibitor family.

The polypeptide is Bowman-Birk type trypsin inhibitor (Vigna radiata var. radiata (Mung bean)).